The chain runs to 100 residues: Putative antiporter subunit mnhF2 (100 aa).

A run of 3 helical transmembrane segments spans residues 5-25 (ITHI…IICL), 38-60 (VVTF…VLMG), and 70-92 (LIAI…GHVF).

The protein belongs to the CPA3 antiporters (TC 2.A.63) subunit F family. May form a heterooligomeric complex that consists of seven subunits: mnhA2, mnhB2, mnhC2, mnhD2, mnhE2, mnhF2 and mnhG2.

Its subcellular location is the cell membrane. The protein is Putative antiporter subunit mnhF2 (mnhF2) of Staphylococcus aureus (strain USA300).